The following is a 383-amino-acid chain: Guanine nucleotide-binding protein G(s) subunit alpha (383 aa).

The tract at residues 1–31 is disordered; it reads MGCFGSAGSKQSDSNSSEDTKSQKRRSDAIT. Gly-2 is lipidated: N-palmitoyl glycine. The S-palmitoyl cysteine moiety is linked to residue Cys-3. The segment covering 8-17 has biased composition (polar residues); sequence GSKQSDSNSS. Over residues 18–31 the composition is skewed to basic and acidic residues; it reads EDTKSQKRRSDAIT. In terms of domain architecture, G-alpha spans 43 to 383; the sequence is ATHRLLLLGA…RMHLRQYELL (341 aa). Residues 46–59 are G1 motif; that stretch reads RLLLLGAGESGKST. GTP-binding positions include 51-58, 187-193, 212-216, 281-284, and Ala-355; these read GAGESGKS, LRCRVLT, DVGGQ, and NKQD. Mg(2+)-binding residues include Ser-58 and Thr-193. The tract at residues 185 to 193 is G2 motif; that stretch reads DILRCRVLT. The segment at 208–217 is G3 motif; the sequence is FHMFDVGGQR. A G4 motif region spans residues 277–284; the sequence is ILFLNKQD. Residues 353–358 are G5 motif; the sequence is TCAVDT.

Belongs to the G-alpha family. G(s) subfamily. G proteins are composed of 3 units; alpha, beta and gamma. The alpha chain contains the guanine nucleotide binding site.

In terms of biological role, guanine nucleotide-binding proteins (G proteins) are involved as modulators or transducers in various transmembrane signaling systems. The G(s) protein is involved in hormonal regulation of adenylate cyclase: it activates the cyclase. Participates in olfactory signal transduction. The polypeptide is Guanine nucleotide-binding protein G(s) subunit alpha (Anopheles gambiae (African malaria mosquito)).